Reading from the N-terminus, the 251-residue chain is Cytochrome c oxidase subunit 2 (251 aa).

2 consecutive transmembrane segments (helical) span residues 42-62 (NIMF…FTIV) and 83-103 (IIWT…SFIL). Cu cation-binding residues include His186, Cys221, Glu223, Cys225, His229, and Met232. Residue Glu223 coordinates Mg(2+).

Belongs to the cytochrome c oxidase subunit 2 family. Component of the cytochrome c oxidase (complex IV, CIV), a multisubunit enzyme composed of a catalytic core of 3 subunits and several supernumerary subunits. The complex exists as a monomer or a dimer and forms supercomplexes (SCs) in the inner mitochondrial membrane with ubiquinol-cytochrome c oxidoreductase (cytochrome b-c1 complex, complex III, CIII). The cofactor is Cu cation.

It localises to the mitochondrion inner membrane. It catalyses the reaction 4 Fe(II)-[cytochrome c] + O2 + 8 H(+)(in) = 4 Fe(III)-[cytochrome c] + 2 H2O + 4 H(+)(out). Component of the cytochrome c oxidase, the last enzyme in the mitochondrial electron transport chain which drives oxidative phosphorylation. The respiratory chain contains 3 multisubunit complexes succinate dehydrogenase (complex II, CII), ubiquinol-cytochrome c oxidoreductase (cytochrome b-c1 complex, complex III, CIII) and cytochrome c oxidase (complex IV, CIV), that cooperate to transfer electrons derived from NADH and succinate to molecular oxygen, creating an electrochemical gradient over the inner membrane that drives transmembrane transport and the ATP synthase. Cytochrome c oxidase is the component of the respiratory chain that catalyzes the reduction of oxygen to water. Electrons originating from reduced cytochrome c in the intermembrane space (IMS) are transferred via the dinuclear copper A center (CU(A)) of subunit 2 and heme A of subunit 1 to the active site in subunit 1, a binuclear center (BNC) formed by heme A3 and copper B (CU(B)). The BNC reduces molecular oxygen to 2 water molecules using 4 electrons from cytochrome c in the IMS and 4 protons from the mitochondrial matrix. This Candida glabrata (strain ATCC 2001 / BCRC 20586 / JCM 3761 / NBRC 0622 / NRRL Y-65 / CBS 138) (Yeast) protein is Cytochrome c oxidase subunit 2 (COX2).